A 458-amino-acid polypeptide reads, in one-letter code: ATP synthase subunit beta (458 aa).

Glycine 148–threonine 155 is an ATP binding site.

The protein belongs to the ATPase alpha/beta chains family. F-type ATPases have 2 components, CF(1) - the catalytic core - and CF(0) - the membrane proton channel. CF(1) has five subunits: alpha(3), beta(3), gamma(1), delta(1), epsilon(1). CF(0) has three main subunits: a(1), b(2) and c(9-12). The alpha and beta chains form an alternating ring which encloses part of the gamma chain. CF(1) is attached to CF(0) by a central stalk formed by the gamma and epsilon chains, while a peripheral stalk is formed by the delta and b chains.

Its subcellular location is the cell inner membrane. It catalyses the reaction ATP + H2O + 4 H(+)(in) = ADP + phosphate + 5 H(+)(out). Functionally, produces ATP from ADP in the presence of a proton gradient across the membrane. The catalytic sites are hosted primarily by the beta subunits. This is ATP synthase subunit beta from Pseudomonas entomophila (strain L48).